A 431-amino-acid polypeptide reads, in one-letter code: Glutamyl-tRNA(Gln) amidotransferase subunit A (431 aa).

Active-site charge relay system residues include lysine 55 and serine 130. Residue serine 154 is the Acyl-ester intermediate of the active site.

It belongs to the amidase family. GatA subfamily. As to quaternary structure, heterotrimer of A, B and C subunits.

It carries out the reaction L-glutamyl-tRNA(Gln) + L-glutamine + ATP + H2O = L-glutaminyl-tRNA(Gln) + L-glutamate + ADP + phosphate + H(+). In terms of biological role, allows the formation of correctly charged Gln-tRNA(Gln) through the transamidation of misacylated Glu-tRNA(Gln) in organisms which lack glutaminyl-tRNA synthetase. The reaction takes place in the presence of glutamine and ATP through an activated gamma-phospho-Glu-tRNA(Gln). This chain is Glutamyl-tRNA(Gln) amidotransferase subunit A, found in Methanococcus vannielii (strain ATCC 35089 / DSM 1224 / JCM 13029 / OCM 148 / SB).